The chain runs to 469 residues: Aspartyl/glutamyl-tRNA(Asn/Gln) amidotransferase subunit B (469 aa).

The protein belongs to the GatB/GatE family. GatB subfamily. In terms of assembly, heterotrimer of A, B and C subunits.

It carries out the reaction L-glutamyl-tRNA(Gln) + L-glutamine + ATP + H2O = L-glutaminyl-tRNA(Gln) + L-glutamate + ADP + phosphate + H(+). The enzyme catalyses L-aspartyl-tRNA(Asn) + L-glutamine + ATP + H2O = L-asparaginyl-tRNA(Asn) + L-glutamate + ADP + phosphate + 2 H(+). In terms of biological role, allows the formation of correctly charged Asn-tRNA(Asn) or Gln-tRNA(Gln) through the transamidation of misacylated Asp-tRNA(Asn) or Glu-tRNA(Gln) in organisms which lack either or both of asparaginyl-tRNA or glutaminyl-tRNA synthetases. The reaction takes place in the presence of glutamine and ATP through an activated phospho-Asp-tRNA(Asn) or phospho-Glu-tRNA(Gln). The polypeptide is Aspartyl/glutamyl-tRNA(Asn/Gln) amidotransferase subunit B (Thermus thermophilus (strain ATCC 27634 / DSM 579 / HB8)).